Here is a 275-residue protein sequence, read N- to C-terminus: Glucosamine-6-phosphate deaminase 2 (275 aa).

Catalysis depends on D72, which acts as the Proton acceptor; for enolization step. The stretch at 102 to 131 forms a coiled coil; it reads NNAHILDGNASDLQAECEDFERKIKEAGGI. D141 acts as the For ring-opening step in catalysis. The active-site Proton acceptor; for ring-opening step is the H143. The For ring-opening step role is filled by E148.

This sequence belongs to the glucosamine/galactosamine-6-phosphate isomerase family. As to quaternary structure, homohexamer.

Its subcellular location is the cytoplasm. The enzyme catalyses alpha-D-glucosamine 6-phosphate + H2O = beta-D-fructose 6-phosphate + NH4(+). Catalyzes the reversible conversion of alpha-D-glucosamine 6-phosphate (GlcN-6P) into beta-D-fructose 6-phosphate (Fru-6P) and ammonium ion, a regulatory reaction step in de novo uridine diphosphate-N-acetyl-alpha-D-glucosamine (UDP-GlcNAc) biosynthesis via hexosamine pathway. The sequence is that of Glucosamine-6-phosphate deaminase 2 from Xenopus laevis (African clawed frog).